Reading from the N-terminus, the 278-residue chain is Sulfide dehydrogenase subunit beta (278 aa).

A propeptide spanning residues 1–4 (MFKI) is cleaved from the precursor. Residues 1–95 (MFKILRKERL…LGPLGKPSHI (95 aa)) form the FAD-binding FR-type domain. [2Fe-2S] cluster-binding residues include Cys-222, Cys-225, and Cys-237.

Heterodimer of alpha and beta subunits. Requires FAD as cofactor. It depends on [2Fe-2S] cluster as a cofactor.

The protein resides in the cytoplasm. The enzyme catalyses n sulfur + hydrogen sulfide + NADP(+) = (n+1) sulfur + NADPH. It carries out the reaction 2 reduced [2Fe-2S]-[ferredoxin] + NADP(+) + H(+) = 2 oxidized [2Fe-2S]-[ferredoxin] + NADPH. A bifunctional enzyme that catalyzes the reduction of elemental sulfur or polysulfide to hydrogen sulfide with NADPH as electron donor. Also functions as a reduced ferredoxin:NADP oxidoreductase with a very high affinity for reduced ferredoxin. Exhibits a broad specificity for various physiological and non-physiological substrates with varied reduction potentials such as methyl viologen, benzyl viologen, FAD, FMN, methylene blue, 2,6-dichlorophenolindophenol (DCIP), cytochrome C and ferricyanide with highest preference for benzyl viologen. Does not reduce fumarate, succinate, nitrate, nitrite, sulfate, sulfite or protons. Does not possess any hydrogenase activity or NADPH-dependent glutamate synthase activity. This is Sulfide dehydrogenase subunit beta from Pyrococcus furiosus (strain ATCC 43587 / DSM 3638 / JCM 8422 / Vc1).